Consider the following 488-residue polypeptide: uncharacterized protein (488 aa).

27-38 provides a ligand contact to NAD(+); it reads IVHFGFGAFHRA.

It belongs to the mannitol dehydrogenase family. UxuB subfamily.

This is an uncharacterized protein from Escherichia coli (strain K12).